A 2727-amino-acid polypeptide reads, in one-letter code: MGDVDPETLLEWLSMGQGDERDMQLIALEQLCMLLLMSDNVDRCFESCPPRTFLPALCKIFLDELAPENVLEVTARAITYYLDVSAECTRRIVSIDGAIKAICNHLVVADLSSRTSRDLAEQCIKVLELICTREAGAVFEGGGLNCVLSFIRDCGSQVHKDTLHSAMSVVSRLCTKVEPNTPCIQNCVESLSTLLQHEDPMVSDGALKCFASVADRFTRKWVDPAPLAEYGLTTELLKRLQSVGGNTHSSLTAAGTQPTSSSQPAATTNSDAINENVAGTATISNSTKVKSSDAAASPQSISTTISLLSTLCRGSPSITHDILRSQLADALERALQGDERCVLDCMRFADLLLLLLFEGRQALNRGSNNPNQGQLAPRPRRNNTNTDRTHRQLIDCIRSKDSEALREAIESGGIDVNCMDDVGQTLLNWASAFGTLEMVEYLCEKGADVNKGQRSSSLHYAACFGRPAIAKILLKFGAYPDLRDEDGKTPLDKARERLDDGHREVAAILQSPGEWMSPDHSLLNKDGKKYTLMEPRGDPEMAPIYLKVLLPIFCRTFLGSMLGSVRRASLALIKKIVQYAYPTVLQSLSETSFSEDAASTSGQNGGNLLIEVIASVLDNEDDGDGHLIVLNIIEEIMCKTQEEFLDHFARLGVFAKVQALMDTDAEELYVQLPGTVEEPAAAQRSSTSVVVAPRPTSDDPMEDAKEILQGKPYHWREWSICRGRDCLYVWSDSVALELSNGSNGWFRFIIDGKLATMYSSGSPENGNDSSENRGEFLEKLMRARSCVIAGVVSQPILPTASALRLVVGNWVLQSQKTNQLQIHNTEGHQVTVLQDDLPGFIFESNRGTKHTFSAETVLGPDFASGWSTAKKKRNKSKTEGQKFQVRNLSREIYNKYFKSAQIIPRGAVAILTDIVKQIELSFEEQHMAPNGNWETTLTDALMKLSQLIHEDGVVSAYEMHSSGLVQALVAVLSVNHWETNSPRCKRNKMQKQRVSVFKKCILEDNVESATNKPRTKSTASILIQKLVSVLESTEKLPVYLYDSPCTGYSLQILQKRLRFRLERAECESTLFDRSGRTLKMEPLATIGQLSKYLLKMVAKQWYDLDRSTYFYLKKIREHRTATVFTHSFDFDEEGLLFYIGSNAKTCDWVNPAQYGLVQVTSSEGKTLPYGKLEDILSRDSISLNCHTKDNKKAWFAIDLGVYIIPTAYTLRHARGYGRSALRNWLLQGSKDGSTWTTLSTHVDDKSLVEPGSTATWPINCATDDSVWYRHIRIQQNGRNASGQTHYLSLSGFEIYGRVVGVADDIGKSVKEAEAKTRRERRQIRAQLKHMTTGARVIRGVDWRWEEQDGCAEGTITGEIHNGWIDVKWDHGVRNSYRMGAEGKYDLKLADCEYLSAFDGNQSMGSASTAAKPSEKGGNTLTSRKSSSTPSLPEATEKNQNPEGASNQTVSADNLAWKQTVETIAENVFASAKTQIISNQLAMNTSSSREARAKHKESGTNQMHKDNISGPSPLSRELEHISDLSAINNSMPAINSSNVSDLATISENLSLTELSKENICRVLTPSYKPAESVTASQSSSHPDVQSSSPRENDIKNISNIEENNKMNANNSVNKISKDLLANLRTSNIAGCPPVTQLSTEALEMIDKMRDGVDMIRNMSNSILSTDTFPVPCTNVPVGGKKTPKAQALINPDNANQKQIIVTSEEFPTKSSKKPSVTLKPAQQPNAVLSIVDIKEQPISNENVSVPSQMSISVPNLTTTSASEVPSTSEVATHTGLLETFAAIARRRTSQGTNIQDNQIMNAEANVNEHGDQNASGSFLGHSVTSLVKLALSSNFHSGLLSTAQSYPSLSSNNSENIAPSNPSNTSAGQQSASTINHTLTMSLTSTSSDSEQVSLEDFLESCRAPALLGDLDDEDDMDEDNDEEENEDEYEEVGNTLLQVMVSRNLLTFMDDEAMENRLVGVTKRKSWDDEFVLKRQFSALIPAFDPRPGRTNVNQTSDLEISPLGAELPKPQQSGGPETIEQPLLGLKLRGPGIGGIPEVEIDLSNTDWTIFRAVQELLQCSQLNKLDKFRKIWEPTYTIVYREVSPEAQESTCLESEEFPQTPDVSSKSGASTLSPNSPMHIGFNVADNNLCSVDDVLELLTQINGLNQSEIDSDVKEHGVSVLSEDLFISKKITNKLQQQIQDPLVLASNALPNWCENLNQSCPFLFPFETRQLYFNCTSFGASRSIVCLQSQRDVTVERQRIPIMSPRRDDHEFRIGRLKHERVKVPRNEDLLMWAMQVMKTHCNRKSVLEVEFLDEEGTGLGPTLEFYALVAAEIQRSDLCMWLCDDDLGEDTENSTQSAEGNSKPVGYYVNRREHGIFPAPLPQNSEICENVLKYFWFFGVFVAKVLQDMRLVDIPLSTSFLQLLCHNKVLSRNLQKVISDRRNGDLSVVSEDSDIVETCTKLLRTDSNKSNAFGGILSLENLKEIDPTRYQFLQEMQNLLLRKQSIEFDDTISAEKKHELINELKLQTQNGLEVSLEDLALTFTYLPSSSIYGYTQAELLPNGSSVNVTIDNLEAYCELLMNFILQDGIAQQMKAFSDGFNEVFPLKKLAAFTPSEARMMICGEQFPHWSREDIISYTEPKLGYNKDSPGFQRFVNVLLSMSGDERKAFLQFTTGCSSLPPGGLANLHPRLTVVRKVDAGVGSYPSVNTCVHYLKLPDYPTEEIMKERLLTATKEKGFHLN.

Disordered regions lie at residues 247-271 (THSS…TNSD) and 365-389 (RGSN…TDRT). Positions 365–374 (RGSNNPNQGQ) are enriched in polar residues. ANK repeat units follow at residues 422–451 (VGQT…DVNK), 453–482 (QRSS…YPDL), and 486–518 (DGKT…WMSP). The segment at 682–702 (AQRSSTSVVVAPRPTSDDPME) is disordered. Residues 1322–1392 (QIRAQLKHMT…KYDLKLADCE (71 aa)) form the MIB/HERC2 domain. Composition is skewed to polar residues over residues 1401–1430 (QSMG…STPS) and 1437–1448 (KNQNPEGASNQT). 6 disordered regions span residues 1401–1448 (QSMG…SNQT), 1483–1512 (NTSS…GPSP), 1570–1592 (ESVT…REND), 1845–1871 (YPSL…QQSA), 1905–1930 (ALLG…DEYE), and 2092–2115 (STCL…ASTL). Positions 1575-1592 (SQSSSHPDVQSSSPREND) are enriched in low complexity. A compositionally biased stretch (acidic residues) spans 1909 to 1930 (DLDDEDDMDEDNDEEENEDEYE). A compositionally biased stretch (polar residues) spans 2104 to 2115 (PDVSSKSGASTL). One can recognise an HECT domain in the interval 2289–2727 (RKSVLEVEFL…ATKEKGFHLN (439 aa)). Residue Cys-2696 is the Glycyl thioester intermediate of the active site.

The protein belongs to the UPL family. K-HECT subfamily.

It catalyses the reaction S-ubiquitinyl-[E2 ubiquitin-conjugating enzyme]-L-cysteine + [acceptor protein]-L-lysine = [E2 ubiquitin-conjugating enzyme]-L-cysteine + N(6)-ubiquitinyl-[acceptor protein]-L-lysine.. Its pathway is protein modification; protein ubiquitination. Functionally, E3 ubiquitin-protein ligase which accepts ubiquitin from an E2 ubiquitin-conjugating enzyme in the form of a thioester and then directly transfers the ubiquitin to targeted substrates. Involved in the negative regulation of the Ras/MAPK signaling pathway in the wing by acting with the E2 enzyme Unc6 and the putative E3 ligases poe and Kcmf1 to mediate the ubiquitination and proteasomal degradation of rl/MAPK. This chain is E3 ubiquitin-protein ligase Ufd4, found in Drosophila melanogaster (Fruit fly).